The following is an 874-amino-acid chain: Interleukin-12 receptor subunit beta-2 (874 aa).

Positions 1–23 are cleaved as a signal peptide; it reads MAQTVRECSLALLFLFMWLLIKA. At 24–637 the chain is on the extracellular side; that stretch reads NIDVCKLGTV…REFCPQGKAN (614 aa). N-linked (GlcNAc...) asparagine glycosylation is found at N48, N101, N114, N142, N151, N169, N179, N224, N252, N279, N287, N323, N391, and N495. 5 Fibronectin type-III domains span residues 139–237, 242–335, 336–430, 438–530, and 536–635; these read PPQN…FLDI, PPWD…TPEE, EPVG…NIVD, APHQ…IRGD, and PVSG…PQGK. Positions 321 to 325 match the WSXWS motif motif; the sequence is WSNWS. The helical transmembrane segment at 638–658 threads the bilayer; it reads WKAFVISSICIAIITVGTFSI. Residues 659 to 874 are Cytoplasmic-facing; sequence RYFRQKAFTL…GYDSLMSNEA (216 aa). Residues 677 to 685 carry the Box 1 motif motif; that stretch reads YSRTIPDPA. A phosphotyrosine mark is found at Y757, Y804, and Y811.

Belongs to the type I cytokine receptor family. Type 2 subfamily. Heterodimer/heterooligomer; disulfide-linked. The functional high affinity IL12 receptor is composed of I12RB1 and IL12RB2. Il12RB2 binds JAK2 (via its N-terminal) through a membrane-proximal region of the cytoplasmic domain. On IL12 stimulation, phosphorylated on C-terminal tyrosine residues. Phosphorylation of any one of Tyr-757, Tyr-804 or Tyr-811 can activate STAT4, IFN-gamma production, and T-cell proliferation. Tyr-811 is the dominant site of cell proliferation. In terms of tissue distribution, expressed in developing T-helper (TH) cells.

The protein localises to the membrane. Its function is as follows. Receptor for interleukin-12. This subunit is the signaling component coupling to the JAK2/STAT4 pathway. Promotes the proliferation of T-cells as well as NK cells. Induces the promotion of T-cells towards the Th1 phenotype by strongly enhancing IFN-gamma production. Can also activate STAT3. The polypeptide is Interleukin-12 receptor subunit beta-2 (Il12rb2) (Mus musculus (Mouse)).